Consider the following 1306-residue polypeptide: Angiotensin-converting enzyme (1306 aa).

A signal peptide spans 1 to 29; the sequence is MGAASGRRGPGLLLPLPLLLLLPPQPALA. At 30–1256 the chain is on the extracellular side; that stretch reads LDPGLQPGNF…GLDLDAQQAR (1227 aa). Residues asparagine 38, asparagine 54, asparagine 74, glutamate 103, asparagine 111, isoleucine 121, tyrosine 140, asparagine 146, and asparagine 160 are each glycosylated (N-linked (GlcNAc...) asparagine). Peptidase M2 domains follow at residues 40–624 and 643–1222; these read SADE…LGWP and VTDE…LGWP. Cysteine 157 and cysteine 165 are disulfide-bonded. Tyrosine 231 is a chloride binding site. N-linked (GlcNAc...) asparagine glycans are attached at residues asparagine 318 and asparagine 368. Cysteine 359 and cysteine 377 are joined by a disulfide. Residue histidine 390 participates in Zn(2+) binding. The Proton acceptor 1 role is filled by glutamate 391. Residues histidine 394, proline 414, glutamate 418, and arginine 442 each contribute to the Zn(2+) site. N-linked (GlcNAc...) asparagine glycans are attached at residues asparagine 445 and asparagine 509. Histidine 520 acts as the Proton donor 1 in catalysis. Arginine 529 is a chloride binding site. A disulfide bond links cysteine 545 and cysteine 557. Residues asparagine 617 and asparagine 677 are each glycosylated (N-linked (GlcNAc...) asparagine). Residues asparagine 695 and asparagine 714 are each glycosylated (N-linked (GlcNAc...) (complex) asparagine). Cysteine 757 and cysteine 763 are joined by a disulfide. Asparagine 760 carries N-linked (GlcNAc...) asparagine; partial glycosylation. The chloride site is built by arginine 791 and tyrosine 829. Residue asparagine 942 is glycosylated (N-linked (GlcNAc...) asparagine; partial). A disulfide bridge links cysteine 957 with cysteine 975. Histidine 988 contacts Zn(2+). The active-site Proton acceptor 2 is the glutamate 989. Residues histidine 992 and glutamate 1016 each contribute to the Zn(2+) site. Residues tryptophan 1090 and arginine 1094 each coordinate chloride. Catalysis depends on histidine 1118, which acts as the Proton donor 2. Arginine 1127 is a chloride binding site. Cysteines 1143 and 1155 form a disulfide. N-linked (GlcNAc...) asparagine; partial glycosylation occurs at asparagine 1191. Residues 1215–1256 are juxtamembrane stalk; sequence HGEKLGWPQYNWTPNSARSEGPLPDSGRVSFLGLDLDAQQAR. Residues 1257 to 1277 form a helical membrane-spanning segment; the sequence is VGQWLLLFLGIALLVATLGLS. The Cytoplasmic segment spans residues 1278-1306; the sequence is QRLFSIRHRSLHRHSHGPQFGSEVELRHS. Serine 1299 is modified (phosphoserine).

Belongs to the peptidase M2 family. In terms of assembly, monomer and homodimer; homodimerizes following binding to an inhibitor. Interacts with calmodulin (CALM1, CALM2 or CALM3); interaction takes place in the cytoplasmic region and regulates phosphorylation and proteolytic cleavage. Zn(2+) is required as a cofactor. It depends on chloride as a cofactor. Post-translationally, produced following proteolytic cleavage by secretase enzymes that cleave the transmembrane form in the juxtamembrane stalk region upstream of the transmembrane region. Cleavage can take place at different sites of the juxtamembrane stalk region. In terms of processing, phosphorylated by CK2 on Ser-1299; which allows membrane retention. Phosphorylated on tyrosine residues on its extracellular part, promoting cleavage by secretase enzymes and formation of the soluble form (Angiotensin-converting enzyme, soluble form). As to expression, ubiquitously expressed, with highest levels in lung, kidney, heart, gastrointestinal system and prostate. In terms of tissue distribution, specifically expressed in spermatocytes and adult testis.

Its subcellular location is the cell membrane. The protein localises to the cytoplasm. It localises to the secreted. The enzyme catalyses Release of a C-terminal dipeptide, oligopeptide-|-Xaa-Yaa, when Xaa is not Pro, and Yaa is neither Asp nor Glu. Thus, conversion of angiotensin I to angiotensin II, with increase in vasoconstrictor activity, but no action on angiotensin II.. It catalyses the reaction angiotensin I + H2O = L-histidyl-L-leucine + angiotensin II. It carries out the reaction bradykinin + H2O = L-Phe-L-Arg + bradykinin(1-7). The catalysed reaction is substance P + H2O = substance P(1-9) + L-Leu-L-Met-NH2. The enzyme catalyses substance P + H2O = substance P(1-8) + Gly-L-Leu-L-Met-NH2. It catalyses the reaction substance P + H2O = L-Phe-L-Phe-Gly-L-Leu-L-Met-NH2 + substance P(1-6). It carries out the reaction neurotensin + H2O = neurotensin(1-11) + L-isoleucyl-L-leucine. The catalysed reaction is goralatide + H2O = N-acetyl-L-seryl-L-aspartate + L-lysyl-L-proline. The enzyme catalyses Met-enkephalin + H2O = L-phenylalanyl-L-methionine + L-tyrosylglycylglycine. It catalyses the reaction Leu-enkephalin + H2O = L-tyrosylglycylglycine + L-phenylalanyl-L-leucine. It carries out the reaction Met-enkephalin-Arg-Phe + H2O = L-arginyl-L-phenylalanine + Met-enkephalin. Its activity is regulated as follows. The dipeptidyl carboxypeptidase activity is strongly activated by chloride. The dipeptidyl carboxypeptidase activity is specifically inhibited by lisinopril, captopril and enalaprilat. With respect to regulation, strongly inhibited by lisinopril and captopril. In terms of biological role, dipeptidyl carboxypeptidase that removes dipeptides from the C-terminus of a variety of circulating hormones, such as angiotensin I, bradykinin or enkephalins, thereby playing a key role in the regulation of blood pressure, electrolyte homeostasis or synaptic plasticity. Composed of two similar catalytic domains, each possessing a functional active site, with different selectivity for substrates. Plays a major role in the angiotensin-renin system that regulates blood pressure and sodium retention by the kidney by converting angiotensin I to angiotensin II, resulting in an increase of the vasoconstrictor activity of angiotensin. Also able to inactivate bradykinin, a potent vasodilator, and therefore enhance the blood pressure response. Acts as a regulator of synaptic transmission by mediating cleavage of neuropeptide hormones, such as substance P, neurotensin or enkephalins. Catalyzes degradation of different enkephalin neuropeptides (Met-enkephalin, Leu-enkephalin, Met-enkephalin-Arg-Phe and possibly Met-enkephalin-Arg-Gly-Leu). Acts as a regulator of synaptic plasticity in the nucleus accumbens of the brain by mediating cleavage of Met-enkephalin-Arg-Phe, a strong ligand of Mu-type opioid receptor OPRM1, into Met-enkephalin. Met-enkephalin-Arg-Phe cleavage by ACE decreases activation of OPRM1, leading to long-term synaptic potentiation of glutamate release. Also acts as a regulator of hematopoietic stem cell differentiation by mediating degradation of hemoregulatory peptide N-acetyl-SDKP (AcSDKP). Acts as a regulator of cannabinoid signaling pathway by mediating degradation of hemopressin, an antagonist peptide of the cannabinoid receptor CNR1. Involved in amyloid-beta metabolism by catalyzing degradation of Amyloid-beta protein 40 and Amyloid-beta protein 42 peptides, thereby preventing plaque formation. Catalyzes cleavage of cholecystokinin (maturation of Cholecystokinin-8 and Cholecystokinin-5) and Gonadoliberin-1 (both maturation and degradation) hormones. Degradation of hemoregulatory peptide N-acetyl-SDKP (AcSDKP) and amyloid-beta proteins is mediated by the N-terminal catalytic domain, while angiotensin I and cholecystokinin cleavage is mediated by the C-terminal catalytic region. Its function is as follows. Soluble form that is released in blood plasma and other body fluids following proteolytic cleavage in the juxtamembrane stalk region. Isoform produced by alternative promoter usage that is specifically expressed in spermatocytes and adult testis, and which is required for male fertility. In contrast to somatic isoforms, only contains one catalytic domain. Acts as a dipeptidyl carboxypeptidase that removes dipeptides from the C-terminus of substrates. The identity of substrates that are needed for male fertility is unknown. May also have a glycosidase activity which releases GPI-anchored proteins from the membrane by cleaving the mannose linkage in the GPI moiety. The GPIase activity was reported to be essential for the egg-binding ability of the sperm. This activity is however unclear and has been challenged by other groups, suggesting that it may be indirect. This is Angiotensin-converting enzyme from Homo sapiens (Human).